The chain runs to 252 residues: Triosephosphate isomerase (252 aa).

10–12 is a substrate binding site; sequence NWK. The Electrophile role is filled by histidine 96. Glutamate 168 serves as the catalytic Proton acceptor. Residues glycine 174, serine 214, and 235–236 each bind substrate; that span reads GG.

The protein belongs to the triosephosphate isomerase family. As to quaternary structure, homodimer.

The protein resides in the cytoplasm. The catalysed reaction is D-glyceraldehyde 3-phosphate = dihydroxyacetone phosphate. It functions in the pathway carbohydrate biosynthesis; gluconeogenesis. The protein operates within carbohydrate degradation; glycolysis; D-glyceraldehyde 3-phosphate from glycerone phosphate: step 1/1. In terms of biological role, involved in the gluconeogenesis. Catalyzes stereospecifically the conversion of dihydroxyacetone phosphate (DHAP) to D-glyceraldehyde-3-phosphate (G3P). In Streptococcus agalactiae serotype Ia (strain ATCC 27591 / A909 / CDC SS700), this protein is Triosephosphate isomerase.